The sequence spans 168 residues: Urease accessory protein UreE (168 aa).

A disordered region spans residues 145–168; it reads EGGAYAAGQGGGHGPHGQHTHPHH.

The protein belongs to the UreE family.

The protein localises to the cytoplasm. Its function is as follows. Involved in urease metallocenter assembly. Binds nickel. Probably functions as a nickel donor during metallocenter assembly. The polypeptide is Urease accessory protein UreE (Verminephrobacter eiseniae (strain EF01-2)).